The following is a 168-amino-acid chain: Probable chorismate pyruvate-lyase (168 aa).

Substrate-binding residues include R75, I114, and E155.

This sequence belongs to the UbiC family.

It localises to the cytoplasm. It catalyses the reaction chorismate = 4-hydroxybenzoate + pyruvate. Its pathway is cofactor biosynthesis; ubiquinone biosynthesis. Its function is as follows. Removes the pyruvyl group from chorismate, with concomitant aromatization of the ring, to provide 4-hydroxybenzoate (4HB) for the ubiquinone pathway. This Psychrobacter arcticus (strain DSM 17307 / VKM B-2377 / 273-4) protein is Probable chorismate pyruvate-lyase.